Reading from the N-terminus, the 189-residue chain is Peptidyl-tRNA hydrolase (189 aa).

Position 15 (Tyr-15) interacts with tRNA. His-20 functions as the Proton acceptor in the catalytic mechanism. Positions 66, 68, and 114 each coordinate tRNA.

This sequence belongs to the PTH family. As to quaternary structure, monomer.

It localises to the cytoplasm. It carries out the reaction an N-acyl-L-alpha-aminoacyl-tRNA + H2O = an N-acyl-L-amino acid + a tRNA + H(+). Functionally, hydrolyzes ribosome-free peptidyl-tRNAs (with 1 or more amino acids incorporated), which drop off the ribosome during protein synthesis, or as a result of ribosome stalling. Its function is as follows. Catalyzes the release of premature peptidyl moieties from peptidyl-tRNA molecules trapped in stalled 50S ribosomal subunits, and thus maintains levels of free tRNAs and 50S ribosomes. The sequence is that of Peptidyl-tRNA hydrolase from Streptococcus equi subsp. zooepidemicus (strain H70).